Reading from the N-terminus, the 156-residue chain is Small ribosomal subunit protein uS7 (156 aa).

Belongs to the universal ribosomal protein uS7 family. In terms of assembly, part of the 30S ribosomal subunit. Contacts proteins S9 and S11.

Its function is as follows. One of the primary rRNA binding proteins, it binds directly to 16S rRNA where it nucleates assembly of the head domain of the 30S subunit. Is located at the subunit interface close to the decoding center, probably blocks exit of the E-site tRNA. This Mycobacterium bovis (strain ATCC BAA-935 / AF2122/97) protein is Small ribosomal subunit protein uS7.